The sequence spans 106 residues: UPF0145 protein PSEEN3024 (106 aa).

Belongs to the UPF0145 family.

This chain is UPF0145 protein PSEEN3024, found in Pseudomonas entomophila (strain L48).